The following is a 514-amino-acid chain: MPLELTQSRVQKIWVPVDHRPSLPRSCGPKLTNSPTVIVMVGLPARGKTYISKKLTRYLNWIGVPTKVFNVGEYRREAVKQYSSYNFFRPDNEEAMKVRKQCALAALRDVKSYLAKEGGQIAVFDATNTTRERRHMILHFAKENDFKAFFIESVCDDPTVVASNIMEVKISSPDYKDCNSAEAMDDFMKRISCYEASYQPLDPDKCDRDLSLIKVIDVGRRFLVNRVQDHIQSRIVYYLMNIHVQPRTIYLCRHGENEHNLQGRIGGDSGLSSRGKKFASALSKFVEEQNLKDLRVWTSQLKSTIQTAEALRLPYEQWKALNEIDAGVCEELTYEEIRDTYPEEYALREQDKYYYRYPTGESYQDLVQRLEPVIMELERQENVLVICHQAVLRCLLAYFLDKSAEEMPYLKCPLHTVLKLTPVAYGCRVESIYLNVESVCTHRERSEDAKKGPNPLMRRNSVTPLASPEPTKKPRINSFEEHVASTSAALPSCLPPEVPTQLPGQPLLGQACLT.

The segment at 1–245 is 6-phosphofructo-2-kinase; that stretch reads MPLELTQSRV…VYYLMNIHVQ (245 aa). 42–50 contacts ATP; sequence GLPARGKTY. R75 and R99 together coordinate beta-D-fructose 6-phosphate. D125 is a catalytic residue. Beta-D-fructose 6-phosphate contacts are provided by T127 and R133. Residue C155 is part of the active site. An ATP-binding site is contributed by 164–169; it reads NIMEVK. Residues K169, R190, and Y194 each coordinate beta-D-fructose 6-phosphate. The fructose-2,6-bisphosphatase stretch occupies residues 246–514; that stretch reads PRTIYLCRHG…QPLLGQACLT (269 aa). Beta-D-fructose 2,6-bisphosphate is bound at residue R253. Catalysis depends on H254, which acts as the Tele-phosphohistidine intermediate. Residues N260 and G266 each coordinate beta-D-fructose 2,6-bisphosphate. E323 acts as the Proton donor/acceptor in catalysis. Y334, R348, K352, Y363, Q389, and R393 together coordinate beta-D-fructose 2,6-bisphosphate. 345–348 contacts ATP; that stretch reads YALR. ATP contacts are provided by residues 389-393 and Y425; that span reads QAVLR. Positions 444–475 are disordered; the sequence is ERSEDAKKGPNPLMRRNSVTPLASPEPTKKPR. Position 461 is a phosphoserine; by AMPK and PKA (S461). A Phosphothreonine modification is found at T463. A Phosphoserine modification is found at S467. T471 carries the post-translational modification Phosphothreonine; by PKC.

This sequence in the C-terminal section; belongs to the phosphoglycerate mutase family. In terms of assembly, homodimer. Forms a heterodimer with PFKFB2. Post-translationally, phosphorylation by AMPK stimulates activity.

It carries out the reaction beta-D-fructose 2,6-bisphosphate + H2O = beta-D-fructose 6-phosphate + phosphate. The enzyme catalyses beta-D-fructose 6-phosphate + ATP = beta-D-fructose 2,6-bisphosphate + ADP + H(+). Its function is as follows. Catalyzes both the synthesis and degradation of fructose 2,6-bisphosphate. The chain is 6-phosphofructo-2-kinase/fructose-2,6-bisphosphatase 3 (PFKFB3) from Pongo abelii (Sumatran orangutan).